The chain runs to 286 residues: Bifunctional protein FolD (286 aa).

NADP(+)-binding positions include 166 to 168 (GAS) and Ile232.

This sequence belongs to the tetrahydrofolate dehydrogenase/cyclohydrolase family. As to quaternary structure, homodimer.

The catalysed reaction is (6R)-5,10-methylene-5,6,7,8-tetrahydrofolate + NADP(+) = (6R)-5,10-methenyltetrahydrofolate + NADPH. It catalyses the reaction (6R)-5,10-methenyltetrahydrofolate + H2O = (6R)-10-formyltetrahydrofolate + H(+). The protein operates within one-carbon metabolism; tetrahydrofolate interconversion. Functionally, catalyzes the oxidation of 5,10-methylenetetrahydrofolate to 5,10-methenyltetrahydrofolate and then the hydrolysis of 5,10-methenyltetrahydrofolate to 10-formyltetrahydrofolate. This is Bifunctional protein FolD from Blochmanniella pennsylvanica (strain BPEN).